The chain runs to 69 residues: uncharacterized protein (69 aa).

Residues 1-16 form the signal peptide; sequence MKKIMLFLAMTSILSA. Cys-17 is lipidated: N-palmitoyl cysteine. Cys-17 carries S-diacylglycerol cysteine lipidation.

Its subcellular location is the cell membrane. This is an uncharacterized protein from Bacillus subtilis (strain 168).